Consider the following 712-residue polypeptide: Polyribonucleotide nucleotidyltransferase (712 aa).

2 residues coordinate Mg(2+): Asp-487 and Asp-493. A KH domain is found at 554 to 613 (PRIEVMNIPVDKIREVIGSGGKVIREIVEKTGAKINIEDDGTVKIASSSGKEIEAARKWI). The S1 motif domain occupies 623–691 (GQIYEGTVVK…ERGKVRLSMK (69 aa)).

It belongs to the polyribonucleotide nucleotidyltransferase family. Mg(2+) is required as a cofactor.

It is found in the cytoplasm. The catalysed reaction is RNA(n+1) + phosphate = RNA(n) + a ribonucleoside 5'-diphosphate. Functionally, involved in mRNA degradation. Catalyzes the phosphorolysis of single-stranded polyribonucleotides processively in the 3'- to 5'-direction. In Rhizobium etli (strain CIAT 652), this protein is Polyribonucleotide nucleotidyltransferase.